A 445-amino-acid polypeptide reads, in one-letter code: Probable protein phosphatase 2C 14 (445 aa).

The 321-residue stretch at 120 to 440 (GFGVVSRNGK…DDITVVIIDL (321 aa)) folds into the PPM-type phosphatase domain. Mn(2+)-binding residues include Asp-156, Gly-157, and Asp-318. The tract at residues 384 to 404 (NSENESPSLNREIGSSPSKSP) is disordered. Polar residues predominate over residues 390–404 (PSLNREIGSSPSKSP). Asp-431 is a Mn(2+) binding site.

This sequence belongs to the PP2C family. Mg(2+) serves as cofactor. The cofactor is Mn(2+).

It catalyses the reaction O-phospho-L-seryl-[protein] + H2O = L-seryl-[protein] + phosphate. The enzyme catalyses O-phospho-L-threonyl-[protein] + H2O = L-threonyl-[protein] + phosphate. This Arabidopsis thaliana (Mouse-ear cress) protein is Probable protein phosphatase 2C 14.